We begin with the raw amino-acid sequence, 146 residues long: Hut operon positive regulatory protein (146 aa).

The protein belongs to the HutP family. Homohexamer.

Antiterminator that binds to cis-acting regulatory sequences on the mRNA in the presence of histidine, thereby suppressing transcription termination and activating the hut operon for histidine utilization. This chain is Hut operon positive regulatory protein, found in Bacillus cereus (strain AH820).